Reading from the N-terminus, the 289-residue chain is Right origin-binding protein (289 aa).

An HTH araC/xylS-type domain is found at 8-106; sequence RDLLIWLEGH…AQTPALYRRS (99 aa). 2 DNA-binding regions (H-T-H motif) span residues 25–46 and 73–96; these read DNVAAKAGYSKWHLQRMFKDVT and ILDIALQYRFDSQQTFTRAFKKQF.

Transcriptional regulator. Binds to the right arm of the replication origin oriC of the chromosome. Rob binding may influence the formation of the nucleoprotein structure, required for oriC function in the initiation of replication. The polypeptide is Right origin-binding protein (rob) (Escherichia coli O157:H7).